A 225-amino-acid polypeptide reads, in one-letter code: Ribose-5-phosphate isomerase A (225 aa).

Substrate is bound by residues 27–30 (SGST), 80–83 (DGAD), and 93–96 (KGGG). Glu102 functions as the Proton acceptor in the catalytic mechanism. Substrate is bound at residue Lys120.

Belongs to the ribose 5-phosphate isomerase family. In terms of assembly, homodimer.

The enzyme catalyses aldehydo-D-ribose 5-phosphate = D-ribulose 5-phosphate. The protein operates within carbohydrate degradation; pentose phosphate pathway; D-ribose 5-phosphate from D-ribulose 5-phosphate (non-oxidative stage): step 1/1. Catalyzes the reversible conversion of ribose-5-phosphate to ribulose 5-phosphate. The polypeptide is Ribose-5-phosphate isomerase A (Korarchaeum cryptofilum (strain OPF8)).